The primary structure comprises 516 residues: Putative transposase y4bL/y4kJ/y4tB (516 aa).

In terms of domain architecture, HTH IS408-type spans 15–96 (IRTILRLTHE…PDWALVVREL (82 aa)). Residues 138 to 319 (FRNRHAAGAV…SRRELFEEIE (182 aa)) form the Integrase catalytic domain. Residues 493-516 (ERPQAEHAAPTPAHTNIRGRSYYQ) form a disordered region.

The protein belongs to the transposase IS21/IS408/IS1162 family.

The polypeptide is Putative transposase y4bL/y4kJ/y4tB (Sinorhizobium fredii (strain NBRC 101917 / NGR234)).